The chain runs to 295 residues: Probable isochorismatase (295 aa).

Positions Met1 to Arg21 are disordered. A Carrier domain is found at Glu207–Arg286. Ser247 bears the O-(pantetheine 4'-phosphoryl)serine mark.

It belongs to the isochorismatase family. Pantetheine 4'-phosphate serves as cofactor.

The enzyme catalyses isochorismate + H2O = (2S,3S)-2,3-dihydroxy-2,3-dihydrobenzoate + pyruvate. Its pathway is siderophore biosynthesis; vulnibactin biosynthesis. Involved in the biosynthesis of the catechol siderophore vulnibactin. Vulnibactin is a chelating compound involved in transporting iron from the bacterial environment into the cell cytoplasm. The sequence is that of Probable isochorismatase (venB) from Vibrio vulnificus (strain CMCP6).